We begin with the raw amino-acid sequence, 293 residues long: GPN-loop GTPase 3 (293 aa).

13 to 18 is a GTP binding site; it reads GAGKST. A Gly-Pro-Asn (GPN)-loop; involved in dimer interface motif is present at residues 70–72; that stretch reads GPN. Residue 176-179 participates in GTP binding; the sequence is SKMD. Basic and acidic residues predominate over residues 272–281; the sequence is HEAQEPREPN. The tract at residues 272 to 293 is disordered; it reads HEAQEPREPNDEQDVDYEDADI. A compositionally biased stretch (acidic residues) spans 282–293; the sequence is DEQDVDYEDADI.

The protein belongs to the GPN-loop GTPase family. In terms of assembly, heterodimers with gpn1 or gpn2. Binds to RNA polymerase II (RNAPII).

Functionally, small GTPase required for proper nuclear import of RNA polymerase II and III (RNAPII and RNAPIII). May act at an RNAP assembly step prior to nuclear import. In Aspergillus fumigatus (strain ATCC MYA-4609 / CBS 101355 / FGSC A1100 / Af293) (Neosartorya fumigata), this protein is GPN-loop GTPase 3.